We begin with the raw amino-acid sequence, 440 residues long: L-seryl-tRNA(Sec) selenium transferase (440 aa).

The residue at position 282 (Lys-282) is an N6-(pyridoxal phosphate)lysine.

This sequence belongs to the SelA family. Pyridoxal 5'-phosphate serves as cofactor.

Its subcellular location is the cytoplasm. It carries out the reaction L-seryl-tRNA(Sec) + selenophosphate + H(+) = L-selenocysteinyl-tRNA(Sec) + phosphate. It participates in aminoacyl-tRNA biosynthesis; selenocysteinyl-tRNA(Sec) biosynthesis; selenocysteinyl-tRNA(Sec) from L-seryl-tRNA(Sec) (bacterial route): step 1/1. Functionally, converts seryl-tRNA(Sec) to selenocysteinyl-tRNA(Sec) required for selenoprotein biosynthesis. This is L-seryl-tRNA(Sec) selenium transferase from Campylobacter jejuni (strain RM1221).